A 98-amino-acid chain; its full sequence is Integration host factor subunit alpha (98 aa).

Positions 54–74 (LRDKSSRPGRNPKTGESVPVS) are disordered.

The protein belongs to the bacterial histone-like protein family. Heterodimer of an alpha and a beta chain.

This protein is one of the two subunits of integration host factor, a specific DNA-binding protein that functions in genetic recombination as well as in transcriptional and translational control. This chain is Integration host factor subunit alpha (ihfA), found in Pasteurella multocida (strain Pm70).